Consider the following 253-residue polypeptide: tRNA (guanine-N(7)-)-methyltransferase (253 aa).

The span at 1–12 shows a compositional bias: pro residues; it reads MSQTPMPQPDQA. Residues 1–39 form a disordered region; sequence MSQTPMPQPDQAPPVDVGQPVDEAEAKRRRFKTHGRKKG. Positions 27–39 are enriched in basic residues; that stretch reads KRRRFKTHGRKKG. Glutamate 84, aspartate 109, asparagine 136, and aspartate 159 together coordinate S-adenosyl-L-methionine. Aspartate 159 is an active-site residue. Substrate is bound by residues lysine 163, aspartate 195, and 232–235; that span reads TNFE.

It belongs to the class I-like SAM-binding methyltransferase superfamily. TrmB family.

The catalysed reaction is guanosine(46) in tRNA + S-adenosyl-L-methionine = N(7)-methylguanosine(46) in tRNA + S-adenosyl-L-homocysteine. It functions in the pathway tRNA modification; N(7)-methylguanine-tRNA biosynthesis. Functionally, catalyzes the formation of N(7)-methylguanine at position 46 (m7G46) in tRNA. The sequence is that of tRNA (guanine-N(7)-)-methyltransferase from Magnetococcus marinus (strain ATCC BAA-1437 / JCM 17883 / MC-1).